Reading from the N-terminus, the 134-residue chain is Flagellar basal-body rod protein FlgC (134 aa).

It belongs to the flagella basal body rod proteins family. The basal body constitutes a major portion of the flagellar organelle and consists of four rings (L,P,S, and M) mounted on a central rod. The rod consists of about 26 subunits of FlgG in the distal portion, and FlgB, FlgC and FlgF are thought to build up the proximal portion of the rod with about 6 subunits each.

It is found in the bacterial flagellum basal body. This is Flagellar basal-body rod protein FlgC (flgC) from Escherichia coli O157:H7.